The following is a 404-amino-acid chain: Sorting nexin-5 (404 aa).

Ala2 bears the N-acetylalanine mark. Residues 25–172 form the PX domain; the sequence is LNVDPSLQID…HVFLEYDQDL (148 aa). A 1,2-diacyl-sn-glycero-3-phospho-(1D-myo-inositol-4,5-bisphosphate)-binding positions include 40–46, 99–105, and 113–116; these read SERDKVK, FDGPREK, and EGSM. Positions 169–261 are interaction with DOCK1; that stretch reads DQDLSVRRKN…HSLALEEPTV (93 aa). Residues 183 to 200 are membrane-binding amphipathic helix; sequence FGGFFKSVVKSADEVLFS. Ser193 carries the phosphoserine modification. The region spanning 202 to 404 is the BAR domain; sequence VKEVDDFFEQ…QSCIDLFKNN (203 aa). An N6-acetyllysine modification is found at Lys275.

Belongs to the sorting nexin family. As to quaternary structure, forms heterodimers with BAR domain-containing sorting nexins SNX1 and SNX2; does not homodimerize. The heterodimers are proposed to self-assemble into helical arrays on the membrane to stabilize and expand local membrane curvature underlying endosomal tubule formation. Thought to be a component of the originally described retromer complex (also called SNX-BAR retromer) which is a pentamer containing the heterotrimeric retromer cargo-selective complex (CSC), also described as vacuolar protein sorting subcomplex (VPS), and a heterodimeric membrane-deforming subcomplex formed between SNX1 or SNX2 and SNX5 or SNX6 (also called SNX-BAR subcomplex); the respective CSC and SNX-BAR subcomplexes associate with low affinity. Interacts with SNX1, SNX2, VPS26A, VPS29, VPS35, DCTN1, DOCK1, MIB1, PIP5K1C. Interacts with HGS; increased by PIP5K1C kinase activity and by PtdIns(3P) and/or PtdIns(3,4)P2. In terms of tissue distribution, detected in macrophages (at protein level).

Its subcellular location is the endosome. It is found in the early endosome. It localises to the early endosome membrane. The protein resides in the cell membrane. The protein localises to the cytoplasmic vesicle membrane. Its subcellular location is the cytoplasm. It is found in the cell projection. It localises to the phagocytic cup. The protein resides in the ruffle. Functionally, involved in several stages of intracellular trafficking. Interacts with membranes containing phosphatidylinositol lipids. Acts in part as component of the retromer membrane-deforming SNX-BAR subcomplex. The SNX-BAR retromer mediates retrograde transport of cargo proteins from endosomes to the trans-Golgi network (TGN) and is involved in endosome-to-plasma membrane transport for cargo protein recycling. The SNX-BAR subcomplex functions to deform the donor membrane into a tubular profile called endosome-to-TGN transport carrier (ETC). Does not have in vitro vesicle-to-membrane remodeling activity. Involved in retrograde transport of lysosomal enzyme receptor IGF2R. May function as link between endosomal transport vesicles and dynactin. Plays a role in the internalization of EGFR after EGF stimulation. Involved in EGFR endosomal sorting and degradation; the function involves PIP5K1C and is retromer-independent. Together with PIP5K1C facilitates HGS interaction with ubiquitinated EGFR, which initiates EGFR sorting to intraluminal vesicles (ILVs) of the multivesicular body for subsequent lysosomal degradation. Involved in E-cadherin sorting and degradation; inhibits PIP5K1C-mediated E-cadherin degradation. Plays a role in macropinocytosis. The sequence is that of Sorting nexin-5 (Snx5) from Mus musculus (Mouse).